The sequence spans 158 residues: Protein Smg homolog (158 aa).

It belongs to the Smg family.

This is Protein Smg homolog from Shewanella oneidensis (strain ATCC 700550 / JCM 31522 / CIP 106686 / LMG 19005 / NCIMB 14063 / MR-1).